The following is a 100-amino-acid chain: Small ribosomal subunit protein uS14c (100 aa).

The protein belongs to the universal ribosomal protein uS14 family. In terms of assembly, part of the 30S ribosomal subunit.

Its subcellular location is the plastid. It localises to the chloroplast. Its function is as follows. Binds 16S rRNA, required for the assembly of 30S particles. The polypeptide is Small ribosomal subunit protein uS14c (Mesostigma viride (Green alga)).